The following is a 194-amino-acid chain: dITP/XTP pyrophosphatase (194 aa).

Residue 8–13 (TSNPGK) coordinates substrate. Glutamate 38 and aspartate 67 together coordinate Mg(2+). Aspartate 67 functions as the Proton acceptor in the catalytic mechanism. Substrate-binding positions include serine 68, 152–155 (FGYD), lysine 175, and 180–181 (HR).

The protein belongs to the HAM1 NTPase family. In terms of assembly, homodimer. The cofactor is Mg(2+).

The catalysed reaction is XTP + H2O = XMP + diphosphate + H(+). It catalyses the reaction dITP + H2O = dIMP + diphosphate + H(+). It carries out the reaction ITP + H2O = IMP + diphosphate + H(+). Its function is as follows. Pyrophosphatase that catalyzes the hydrolysis of nucleoside triphosphates to their monophosphate derivatives, with a high preference for the non-canonical purine nucleotides XTP (xanthosine triphosphate), dITP (deoxyinosine triphosphate) and ITP. Seems to function as a house-cleaning enzyme that removes non-canonical purine nucleotides from the nucleotide pool, thus preventing their incorporation into DNA/RNA and avoiding chromosomal lesions. This is dITP/XTP pyrophosphatase from Legionella pneumophila (strain Lens).